Reading from the N-terminus, the 359-residue chain is Transcription factor bHLH130 (359 aa).

Ser60 is subject to Phosphoserine. Residues 161–186 (EEDEESPSNSNGLRRHCSLSSRPPSS) form a disordered region. The segment covering 167 to 184 (PSNSNGLRRHCSLSSRPP) has biased composition (polar residues). Residues 285 to 335 (CATHPRSIAERVRRTRISERMRKLQELVPNMDKQTNTSDMLDLAVDYIKDL) form the bHLH domain.

As to quaternary structure, homodimer.

It localises to the nucleus. This chain is Transcription factor bHLH130 (BHLH130), found in Arabidopsis thaliana (Mouse-ear cress).